Consider the following 215-residue polypeptide: E3 ubiquitin-protein ligase NleG (215 aa).

An RING/U-box domain region spans residues 136-189; that stretch reads CPITLCIPETGVFVRNAKNSEICSLYDHNALTELIRRNAPHPLSREPFVPEMIV. A PDZ-binding motif motif is present at residues 213-215; that stretch reads TRI.

Belongs to the NleG E3 ligase family. Interacts with host GOPC (human protein). Post-translationally, two sizes of protein are detected upon expression in C.rodentium; only the smaller protein is secreted.

The protein resides in the secreted. Its subcellular location is the host cytoplasm. The catalysed reaction is S-ubiquitinyl-[E2 ubiquitin-conjugating enzyme]-L-cysteine + [acceptor protein]-L-lysine = [E2 ubiquitin-conjugating enzyme]-L-cysteine + N(6)-ubiquitinyl-[acceptor protein]-L-lysine.. In terms of biological role, effector proteins function to alter host cell physiology and promote bacterial survival in host tissues. This protein is an E3 ubiquitin-protein ligase that probably interferes with the host's ubiquitination pathway and targets host proteins for proteasomal degradation. Can ubiquitinate ubiquitin, giving rise to polyubiquitin chains (in vitro). Does not complement an nleG8 deletion in C.rodentium. The protein is E3 ubiquitin-protein ligase NleG of Escherichia coli O157:H7.